Consider the following 236-residue polypeptide: Transcription repressor MYB6 (236 aa).

HTH myb-type domains lie at 9–61 (KAHT…INYL) and 62–116 (RPDL…KRKL). DNA-binding regions (H-T-H motif) lie at residues 37–61 (WRSL…INYL) and 89–112 (WSLI…NTHI). The interval 159–181 (PKTENSSDNGASTSGTTTDEDLR) is disordered. The segment covering 162–175 (ENSSDNGASTSGTT) has biased composition (polar residues).

In terms of assembly, interacts with BHLH012/MYC1 and BHLH042/TT8. As to expression, expressed in roots, stems, flower buds, and siliques.

Its subcellular location is the nucleus. This is Transcription repressor MYB6 (MYB6) from Arabidopsis thaliana (Mouse-ear cress).